Reading from the N-terminus, the 472-residue chain is Ribulose bisphosphate carboxylase large chain 1 (472 aa).

Residues Asn-115 and Thr-165 each contribute to the substrate site. The active-site Proton acceptor is Lys-167. Lys-169 contributes to the substrate binding site. Positions 193, 195, and 196 each coordinate Mg(2+). Lys-193 bears the N6-carboxylysine mark. Residue His-286 is the Proton acceptor of the active site. Residues Arg-287, His-319, and Ser-371 each coordinate substrate.

The protein belongs to the RuBisCO large chain family. Type I subfamily. Heterohexadecamer of 8 large chains and 8 small chains. The cofactor is Mg(2+).

It catalyses the reaction 2 (2R)-3-phosphoglycerate + 2 H(+) = D-ribulose 1,5-bisphosphate + CO2 + H2O. It carries out the reaction D-ribulose 1,5-bisphosphate + O2 = 2-phosphoglycolate + (2R)-3-phosphoglycerate + 2 H(+). Functionally, ruBisCO catalyzes two reactions: the carboxylation of D-ribulose 1,5-bisphosphate, the primary event in carbon dioxide fixation, as well as the oxidative fragmentation of the pentose substrate. Both reactions occur simultaneously and in competition at the same active site. The protein is Ribulose bisphosphate carboxylase large chain 1 of Rhodopseudomonas palustris (strain BisB5).